The primary structure comprises 769 residues: Probable beta-glucosidase M (769 aa).

The first 22 residues, 1–22 (MHSNVGLAGLAGLLATASVCLS), serve as a signal peptide directing secretion. N-linked (GlcNAc...) asparagine glycans are attached at residues asparagine 28, asparagine 75, and asparagine 262. Residue aspartate 290 is part of the active site. 7 N-linked (GlcNAc...) asparagine glycosylation sites follow: asparagine 318, asparagine 325, asparagine 396, asparagine 437, asparagine 510, asparagine 546, and asparagine 625.

This sequence belongs to the glycosyl hydrolase 3 family.

It localises to the secreted. It carries out the reaction Hydrolysis of terminal, non-reducing beta-D-glucosyl residues with release of beta-D-glucose.. It functions in the pathway glycan metabolism; cellulose degradation. In terms of biological role, beta-glucosidases are one of a number of cellulolytic enzymes involved in the degradation of cellulosic biomass. Catalyzes the last step releasing glucose from the inhibitory cellobiose. This is Probable beta-glucosidase M (bglM) from Aspergillus fumigatus (strain CBS 144.89 / FGSC A1163 / CEA10) (Neosartorya fumigata).